Here is a 795-residue protein sequence, read N- to C-terminus: Probable alpha,alpha-trehalose-phosphate synthase [UDP-forming] 4 (795 aa).

The segment at 4-469 (PRLLVVSMSL…WADDFMKLTL (466 aa)) is glycosyltransferase.

This sequence in the N-terminal section; belongs to the glycosyltransferase 20 family. It in the C-terminal section; belongs to the trehalose phosphatase family.

It carries out the reaction D-glucose 6-phosphate + UDP-alpha-D-glucose = alpha,alpha-trehalose 6-phosphate + UDP + H(+). The chain is Probable alpha,alpha-trehalose-phosphate synthase [UDP-forming] 4 (TPS4) from Arabidopsis thaliana (Mouse-ear cress).